Reading from the N-terminus, the 39-residue chain is Gas vesicle protein C (39 aa).

Belongs to the gas vesicle GvpC family.

Its subcellular location is the gas vesicle. Confers stability, involved in shaping gas vesicles, hollow, gas filled proteinaceous nanostructures. During planktonic growth they allow positioning of the organism at a favorable depth for light or nutrient acquisition. This Spirulina sp. (strain CCAP 1475/10) protein is Gas vesicle protein C.